The primary structure comprises 1128 residues: Major DNA-binding protein (1128 aa).

A required for nuclear localization region spans residues 1104 to 1128 (LGGGGQGSGGRRKRRLATVLPGLEV).

This sequence belongs to the herpesviridae major DNA-binding protein family. In terms of assembly, homooligomers. Forms double-helical filaments necessary for the formation of replication compartments within the host nucleus. Interacts with the origin-binding protein. Interacts with the helicase primase complex; this interaction stimulates primer synthesis activity of the helicase-primase complex. Interacts with the DNA polymerase. Interacts with the alkaline exonuclease; this interaction increases its nuclease processivity.

It is found in the virion tegument. It localises to the host nucleus. Functionally, plays several crucial roles in viral infection. Participates in the opening of the viral DNA origin to initiate replication by interacting with the origin-binding protein. May disrupt loops, hairpins and other secondary structures present on ssDNA to reduce and eliminate pausing of viral DNA polymerase at specific sites during elongation. Promotes viral DNA recombination by performing strand-transfer, characterized by the ability to transfer a DNA strand from a linear duplex to a complementary single-stranded DNA circle. Can also catalyze the renaturation of complementary single strands. Additionally, reorganizes the host cell nucleus, leading to the formation of prereplicative sites and replication compartments. This process is driven by the protein which can form double-helical filaments in the absence of DNA. This chain is Major DNA-binding protein, found in Homo sapiens (Human).